A 432-amino-acid chain; its full sequence is Enolase (432 aa).

Glutamine 167 is a (2R)-2-phosphoglycerate binding site. The Proton donor role is filled by glutamate 209. Positions 246, 291, and 318 each coordinate Mg(2+). (2R)-2-phosphoglycerate-binding residues include lysine 343, arginine 372, serine 373, and lysine 394. Lysine 343 serves as the catalytic Proton acceptor.

This sequence belongs to the enolase family. Component of the RNA degradosome, a multiprotein complex involved in RNA processing and mRNA degradation. Requires Mg(2+) as cofactor.

The protein resides in the cytoplasm. The protein localises to the secreted. It localises to the cell surface. The enzyme catalyses (2R)-2-phosphoglycerate = phosphoenolpyruvate + H2O. It functions in the pathway carbohydrate degradation; glycolysis; pyruvate from D-glyceraldehyde 3-phosphate: step 4/5. In terms of biological role, catalyzes the reversible conversion of 2-phosphoglycerate (2-PG) into phosphoenolpyruvate (PEP). It is essential for the degradation of carbohydrates via glycolysis. The chain is Enolase from Aliivibrio fischeri (strain ATCC 700601 / ES114) (Vibrio fischeri).